The chain runs to 457 residues: Putative transposase y4bF (457 aa).

The region spanning 128 to 313 is the Integrase catalytic domain; that stretch reads TFHQPRLRRE…RPLNLAPDRL (186 aa). Residues 406-440 are disordered; it reads QDERPAPKVRTNSEKNGYTPRGRKPGKRTDFMNDP.

This Sinorhizobium fredii (strain NBRC 101917 / NGR234) protein is Putative transposase y4bF.